We begin with the raw amino-acid sequence, 493 residues long: 3-octaprenyl-4-hydroxybenzoate carboxy-lyase (493 aa).

Mn(2+) is bound at residue Asn-172. Residues 175 to 177 (IYR), 189 to 191 (RWL), and 194 to 195 (RG) contribute to the prenylated FMN site. Glu-238 contributes to the Mn(2+) binding site. Catalysis depends on Asp-287, which acts as the Proton donor.

Belongs to the UbiD family. Homohexamer. Requires prenylated FMN as cofactor. The cofactor is Mn(2+).

Its subcellular location is the cell membrane. The catalysed reaction is a 4-hydroxy-3-(all-trans-polyprenyl)benzoate + H(+) = a 2-(all-trans-polyprenyl)phenol + CO2. It participates in cofactor biosynthesis; ubiquinone biosynthesis. In terms of biological role, catalyzes the decarboxylation of 3-octaprenyl-4-hydroxy benzoate to 2-octaprenylphenol, an intermediate step in ubiquinone biosynthesis. The polypeptide is 3-octaprenyl-4-hydroxybenzoate carboxy-lyase (Shewanella sp. (strain ANA-3)).